The following is a 201-amino-acid chain: Urease accessory protein UreG (201 aa).

12-19 (GPVGSGKT) contacts GTP.

The protein belongs to the SIMIBI class G3E GTPase family. UreG subfamily. As to quaternary structure, homodimer. UreD, UreF and UreG form a complex that acts as a GTP-hydrolysis-dependent molecular chaperone, activating the urease apoprotein by helping to assemble the nickel containing metallocenter of UreC. The UreE protein probably delivers the nickel.

The protein resides in the cytoplasm. Functionally, facilitates the functional incorporation of the urease nickel metallocenter. This process requires GTP hydrolysis, probably effectuated by UreG. The chain is Urease accessory protein UreG from Dechloromonas aromatica (strain RCB).